A 757-amino-acid chain; its full sequence is POU domain, class 2, transcription factor 1 (757 aa).

Disordered regions lie at residues 1–43 (MKLH…QTNG), 271–295 (AATPVQQLPQSQTTPKRIDTPSLEE), 375–398 (SLSNQSVLNSPGHGMEGLNRRRKK), and 532–574 (VSSV…TSPL). 2 stretches are compositionally biased toward polar residues: residues 19–43 (RMNNPSETSKSSESGDGNTGTQTNG) and 275–285 (VQQLPQSQTTP). The 75-residue stretch at 294–368 (EEPSDLEELE…LLEKWLNDAE (75 aa)) folds into the POU-specific domain. Positions 395–454 (RRKKRTSIETNIRVALEKSFLENQKPTSEEITMIADQLNMEKEVIRVWFCNRRQKEKRIN) form a DNA-binding region, homeobox.

This sequence belongs to the POU transcription factor family. Class-2 subfamily.

It localises to the cytoplasm. Its subcellular location is the nucleus. Transcription factor that binds to the octamer motif (5'-ATTTGCAT-3') and activates the promoters of the genes for some small nuclear RNAs (snRNA) and histone H2B. Acts downstream of Notch signaling during radial glia formation. Regulates apoptosis, possibly via an FGF-signaling pathway. The chain is POU domain, class 2, transcription factor 1 from Xenopus tropicalis (Western clawed frog).